The primary structure comprises 806 residues: Xylosyltransferase sqv-6 (806 aa).

Residues 1–11 (MLFNGTTKYRD) are Cytoplasmic-facing. A helical; Signal-anchor for type II membrane protein transmembrane segment spans residues 12-32 (YAIVISLFFLLNVYLLYNTAQ). Topologically, residues 33-806 (HTQVGNSKHI…GYDEDTQTLI (774 aa)) are lumenal. Residues cysteine 57 and cysteine 85 are joined by a disulfide bond. N-linked (GlcNAc...) asparagine glycosylation is found at asparagine 89 and asparagine 169. 3 cysteine pairs are disulfide-bonded: cysteine 101–cysteine 445, cysteine 464–cysteine 478, and cysteine 466–cysteine 476. The WSC domain maps to 109-205 (IDQRIGCFLD…FNAVEIFRTG (97 aa)). Residues aspartate 264 and 293-295 (TIW) each bind UDP-alpha-D-xylose. An N-linked (GlcNAc...) asparagine glycan is attached at asparagine 325. Position 398–399 (398–399 (DW)) interacts with UDP-alpha-D-xylose. UDP-alpha-D-xylose is bound by residues serine 479 and 505–506 (RK). N-linked (GlcNAc...) asparagine glycosylation is found at asparagine 614, asparagine 655, and asparagine 719. Residues cysteine 772 and cysteine 778 are joined by a disulfide bond.

The protein belongs to the glycosyltransferase 14 family. XylT subfamily. Requires a divalent metal cation as cofactor.

The protein localises to the endoplasmic reticulum membrane. Its subcellular location is the golgi apparatus membrane. The catalysed reaction is UDP-alpha-D-xylose + L-seryl-[protein] = 3-O-(beta-D-xylosyl)-L-seryl-[protein] + UDP + H(+). Its pathway is glycan metabolism; chondroitin sulfate biosynthesis. It functions in the pathway glycan metabolism; heparan sulfate biosynthesis. Functionally, catalyzes the first step in biosynthesis of glycosaminoglycan. Transfers D-xylose from UDP-D-xylose to specific serine residues of the core protein. Required for vulval morphogenesis and zygotic cytokinesis, suggesting that glycosaminoglycans play a central role in vulval morphogenesis. This Caenorhabditis elegans protein is Xylosyltransferase sqv-6.